The primary structure comprises 251 residues: MLAKRIIPCLDIKNGRTVKGVNFVDLRDAGDPVELAEIYSREGADELVFLDISATEERRKTLVNMVRSVAEKINIPFTVGGGISSVEDVDILLNNGADKVSINSSAVKNPQLINDLAQKFGSQCVVVAIDAKQIDGQWIVHLVGGKVPTELNLFDWAVEVAERGAGEILFTSMDNDGTKNGFANEALAKLSELVNIPIIASGGAGNIQHFVDSFKEGKADAALAASVFHFKEIEIKALKQELRKNGVEVRL.

Residues Asp11 and Asp130 contribute to the active site.

This sequence belongs to the HisA/HisF family. In terms of assembly, heterodimer of HisH and HisF.

The protein resides in the cytoplasm. The catalysed reaction is 5-[(5-phospho-1-deoxy-D-ribulos-1-ylimino)methylamino]-1-(5-phospho-beta-D-ribosyl)imidazole-4-carboxamide + L-glutamine = D-erythro-1-(imidazol-4-yl)glycerol 3-phosphate + 5-amino-1-(5-phospho-beta-D-ribosyl)imidazole-4-carboxamide + L-glutamate + H(+). The protein operates within amino-acid biosynthesis; L-histidine biosynthesis; L-histidine from 5-phospho-alpha-D-ribose 1-diphosphate: step 5/9. Functionally, IGPS catalyzes the conversion of PRFAR and glutamine to IGP, AICAR and glutamate. The HisF subunit catalyzes the cyclization activity that produces IGP and AICAR from PRFAR using the ammonia provided by the HisH subunit. The polypeptide is Imidazole glycerol phosphate synthase subunit HisF (Flavobacterium johnsoniae (strain ATCC 17061 / DSM 2064 / JCM 8514 / BCRC 14874 / CCUG 350202 / NBRC 14942 / NCIMB 11054 / UW101) (Cytophaga johnsonae)).